The following is a 112-amino-acid chain: Large ribosomal subunit protein bL17 (112 aa).

The protein belongs to the bacterial ribosomal protein bL17 family. Part of the 50S ribosomal subunit. Contacts protein L32.

This is Large ribosomal subunit protein bL17 from Thermoanaerobacter pseudethanolicus (strain ATCC 33223 / 39E) (Clostridium thermohydrosulfuricum).